The following is a 354-amino-acid chain: Uroporphyrinogen decarboxylase (354 aa).

Substrate-binding positions include 27-31, Asp-77, Tyr-154, Thr-209, and His-327; that span reads RQAGR.

Belongs to the uroporphyrinogen decarboxylase family. Homodimer.

The protein localises to the cytoplasm. It carries out the reaction uroporphyrinogen III + 4 H(+) = coproporphyrinogen III + 4 CO2. It functions in the pathway porphyrin-containing compound metabolism; protoporphyrin-IX biosynthesis; coproporphyrinogen-III from 5-aminolevulinate: step 4/4. Its function is as follows. Catalyzes the decarboxylation of four acetate groups of uroporphyrinogen-III to yield coproporphyrinogen-III. The protein is Uroporphyrinogen decarboxylase of Escherichia fergusonii (strain ATCC 35469 / DSM 13698 / CCUG 18766 / IAM 14443 / JCM 21226 / LMG 7866 / NBRC 102419 / NCTC 12128 / CDC 0568-73).